Reading from the N-terminus, the 367-residue chain is MVAVLTWALALLSAFATAQTQKGFWDYFSQSSGDKSKVARVQQQKLTWETTSLKDSLEQDLSNMDKFLEKLGPLSGQGREPPGLAHDPEGMRQQLQDELAEVRARLEPYMAEAHQQVGWNLEGLRRQLKPYTVELMEQVARRVQELQEQLRVVGEGTKAQLLGGVDEARGLLQELQTRVVQHTGRVRELFHPYAQRLVTGIGRHVQELHRSVAPHAAASSARLSRCVQTLSRKLTLKAEALHARIQQNLDQLREELSAFAGAGAGGAEEGANPDPQMLSQEVRQRLQAFRHDTFLQIADFTRAIDQETEEVQLQLAPPPPGHSAFAPEFLQADSSEARSKLQARLEDLWEDINDSLHDGGLSHLEEP.

Residues 1–20 (MVAVLTWALALLSAFATAQT) form the signal peptide. At serine 56 the chain carries Phosphoserine.

This sequence belongs to the apolipoprotein A1/A4/E family. In terms of assembly, interacts with GPIHBP1. Interacts with SORL1; this interaction leads to APOA5 internalization and sorting either to lysosomes and degradation, or to the trans-Golgi network. Phosphorylated by FAM20C in the extracellular medium.

The protein resides in the secreted. It localises to the early endosome. Its subcellular location is the late endosome. The protein localises to the golgi apparatus. It is found in the trans-Golgi network. In terms of biological role, minor apolipoprotein mainly associated with HDL and to a lesser extent with VLDL. May also be associated with chylomicrons. Important determinant of plasma triglyceride (TG) levels by both being a potent stimulator of apo-CII lipoprotein lipase (LPL) TG hydrolysis and an inhibitor of the hepatic VLDL-TG production rate (without affecting the VLDL-apoB production rate). Activates poorly lecithin:cholesterol acyltransferase (LCAT) and does not enhance efflux of cholesterol from macrophages. Binds heparin. This Phoca vitulina (Harbor seal) protein is Apolipoprotein A-V (APOA5).